Reading from the N-terminus, the 126-residue chain is Small ribosomal subunit protein uS13 (126 aa).

The interval 98 to 126 (PLRGQSTKNNARTRKGKKKTVANKKKATK) is disordered. A compositionally biased stretch (basic residues) spans 108-126 (ARTRKGKKKTVANKKKATK).

This sequence belongs to the universal ribosomal protein uS13 family. Part of the 30S ribosomal subunit. Forms a loose heterodimer with protein S19. Forms two bridges to the 50S subunit in the 70S ribosome.

Its function is as follows. Located at the top of the head of the 30S subunit, it contacts several helices of the 16S rRNA. In the 70S ribosome it contacts the 23S rRNA (bridge B1a) and protein L5 of the 50S subunit (bridge B1b), connecting the 2 subunits; these bridges are implicated in subunit movement. Contacts the tRNAs in the A and P-sites. This is Small ribosomal subunit protein uS13 from Parabacteroides distasonis (strain ATCC 8503 / DSM 20701 / CIP 104284 / JCM 5825 / NCTC 11152).